Consider the following 185-residue polypeptide: HTH-type transcriptional regulator PuuR (185 aa).

The interval 1-20 (MSDEGLAPGKRLSEIRQQQG) is disordered. Positions 12–66 (LSEIRQQQGLSQRRAAELSGLTHSAISTIEQDKVSPAISTLQKLLKVYGLSLSEF) constitute an HTH cro/C1-type domain. The H-T-H motif DNA-binding region spans 23-42 (QRRAAELSGLTHSAISTIEQ). One can recognise a Cupin type-2 domain in the interval 111 to 178 (FETYQPGTTT…TSAGICRIIS (68 aa)).

Its pathway is amine and polyamine degradation; putrescine degradation [regulation]. Represses puuA, puuD and puuP. The sequence is that of HTH-type transcriptional regulator PuuR (puuR) from Escherichia coli (strain K12).